The chain runs to 415 residues: Serine hydroxymethyltransferase (415 aa).

(6S)-5,6,7,8-tetrahydrofolate-binding positions include L117 and 121–123; that span reads GHL. Position 226 is an N6-(pyridoxal phosphate)lysine (K226).

Belongs to the SHMT family. As to quaternary structure, homodimer. It depends on pyridoxal 5'-phosphate as a cofactor.

The protein localises to the cytoplasm. The catalysed reaction is (6R)-5,10-methylene-5,6,7,8-tetrahydrofolate + glycine + H2O = (6S)-5,6,7,8-tetrahydrofolate + L-serine. The protein operates within one-carbon metabolism; tetrahydrofolate interconversion. Its pathway is amino-acid biosynthesis; glycine biosynthesis; glycine from L-serine: step 1/1. Its function is as follows. Catalyzes the reversible interconversion of serine and glycine with tetrahydrofolate (THF) serving as the one-carbon carrier. This reaction serves as the major source of one-carbon groups required for the biosynthesis of purines, thymidylate, methionine, and other important biomolecules. Also exhibits THF-independent aldolase activity toward beta-hydroxyamino acids, producing glycine and aldehydes, via a retro-aldol mechanism. In Dehalococcoides mccartyi (strain ATCC BAA-2266 / KCTC 15142 / 195) (Dehalococcoides ethenogenes (strain 195)), this protein is Serine hydroxymethyltransferase.